The following is a 119-amino-acid chain: MQGQAGKRKTDGKVPSNTEQNCPDLFERPRLVCIMQAPLVQMRTVPSETGHFPKIISLNRSCSRSYLLSMPHTQLPYPLPYGEFPRCSTVRRDHNFPCTLYSAPGVVHPRLCVFSCMMI.

The disordered stretch occupies residues 1 to 22 (MQGQAGKRKTDGKVPSNTEQNC).

This is an uncharacterized protein from Saccharomyces cerevisiae (strain ATCC 204508 / S288c) (Baker's yeast).